Here is a 241-residue protein sequence, read N- to C-terminus: Uridylate kinase (241 aa).

An ATP-binding site is contributed by 14–17 (KASG). The interval 22-27 (GDQGFG) is involved in allosteric activation by GTP. Residue Gly56 participates in UMP binding. Gly57 and Arg61 together coordinate ATP. Residues Asp76 and 137 to 144 (TGNPFFTT) contribute to the UMP site. Thr164, Gln165, Tyr170, and Asp173 together coordinate ATP.

Belongs to the UMP kinase family. As to quaternary structure, homohexamer.

The protein resides in the cytoplasm. It carries out the reaction UMP + ATP = UDP + ADP. It functions in the pathway pyrimidine metabolism; CTP biosynthesis via de novo pathway; UDP from UMP (UMPK route): step 1/1. Its activity is regulated as follows. Allosterically activated by GTP. Inhibited by UTP. Catalyzes the reversible phosphorylation of UMP to UDP. The sequence is that of Uridylate kinase from Agrobacterium fabrum (strain C58 / ATCC 33970) (Agrobacterium tumefaciens (strain C58)).